Reading from the N-terminus, the 255-residue chain is Hydroxyacylglutathione hydrolase (255 aa).

Residues H53, H55, D57, H58, H111, D128, and H166 each coordinate Zn(2+).

It belongs to the metallo-beta-lactamase superfamily. Glyoxalase II family. Monomer. The cofactor is Zn(2+).

The catalysed reaction is an S-(2-hydroxyacyl)glutathione + H2O = a 2-hydroxy carboxylate + glutathione + H(+). Its pathway is secondary metabolite metabolism; methylglyoxal degradation; (R)-lactate from methylglyoxal: step 2/2. In terms of biological role, thiolesterase that catalyzes the hydrolysis of S-D-lactoyl-glutathione to form glutathione and D-lactic acid. In Nitrosomonas eutropha (strain DSM 101675 / C91 / Nm57), this protein is Hydroxyacylglutathione hydrolase.